Here is a 113-residue protein sequence, read N- to C-terminus: Small ribosomal subunit protein uS17 (113 aa).

This sequence belongs to the universal ribosomal protein uS17 family. In terms of assembly, part of the 30S ribosomal subunit.

One of the primary rRNA binding proteins, it binds specifically to the 5'-end of 16S ribosomal RNA. This chain is Small ribosomal subunit protein uS17, found in Nanoarchaeum equitans (strain Kin4-M).